The chain runs to 409 residues: Tyrosine--tRNA ligase (409 aa).

Tyr35 is a binding site for L-tyrosine. The short motif at 40–49 is the 'HIGH' region element; that stretch reads CTAESLHVGS. The L-tyrosine site is built by Tyr172 and Gln176. Positions 232-236 match the 'KMSKS' region motif; the sequence is KMGKT. Lys235 is an ATP binding site. The region spanning 343 to 409 is the S4 RNA-binding domain; the sequence is ISILDLVILS…KKKHIKVELI (67 aa).

This sequence belongs to the class-I aminoacyl-tRNA synthetase family. TyrS type 1 subfamily. Homodimer.

It is found in the cytoplasm. The enzyme catalyses tRNA(Tyr) + L-tyrosine + ATP = L-tyrosyl-tRNA(Tyr) + AMP + diphosphate + H(+). In terms of biological role, catalyzes the attachment of tyrosine to tRNA(Tyr) in a two-step reaction: tyrosine is first activated by ATP to form Tyr-AMP and then transferred to the acceptor end of tRNA(Tyr). This Pelagibacter ubique (strain HTCC1062) protein is Tyrosine--tRNA ligase.